The primary structure comprises 959 residues: Translation initiation factor IF-2 (959 aa).

The span at 1–10 (MSDKTNDDKT) shows a compositional bias: basic and acidic residues. Residues 1-374 (MSDKTNDDKT…SQMQETREKI (374 aa)) form a disordered region. A compositionally biased stretch (polar residues) spans 27–37 (EQSTVRQNFSH). Low complexity-rich tracts occupy residues 63 to 118 (AAAA…VTKP) and 128 to 138 (QRPGGQQAQRP). Basic and acidic residues-rich tracts occupy residues 154-225 (SEMD…EAAK) and 232-241 (ARSERRDDAR). Residues 246–284 (GARPQQAGRPQGGRPQPAGRPQQGSPRPAPIIADAAPIA) are compositionally biased toward low complexity. Residues 318–333 (PEVRAPKVVKGEDDRR) are compositionally biased toward basic and acidic residues. Residues 457–626 (SRPPVVTIMG…LLQAEMLDLK (170 aa)) form the tr-type G domain. Positions 466 to 473 (GHVDHGKT) are G1. 466–473 (GHVDHGKT) is a GTP binding site. The tract at residues 491–495 (GITQH) is G2. Residues 512–515 (DTPG) form a G3 region. GTP contacts are provided by residues 512 to 516 (DTPGH) and 566 to 569 (NKID). Residues 566 to 569 (NKID) are G4. The tract at residues 602-604 (SAK) is G5.

This sequence belongs to the TRAFAC class translation factor GTPase superfamily. Classic translation factor GTPase family. IF-2 subfamily.

It localises to the cytoplasm. One of the essential components for the initiation of protein synthesis. Protects formylmethionyl-tRNA from spontaneous hydrolysis and promotes its binding to the 30S ribosomal subunits. Also involved in the hydrolysis of GTP during the formation of the 70S ribosomal complex. This Brucella abortus (strain 2308) protein is Translation initiation factor IF-2.